The chain runs to 638 residues: MDLWRVFLTLALAVSSDMFPGSGATPATLGKASPVLQRINPSLRESSSGKPRFTKCRSPELETFSCYWTEGDDHNLKVPGSIQLYYARRIAHEWTPEWKECPDYVSAGANSCYFNSSYTSIWIPYCIKLTTNGDLLDEKCFTVDEIVQPDPPIGLNWTLLNISLPGIRGDIQVSWQPPPSADVLKGWIILEYEIQYKEVNETKWKTMSPIWSTSVPLYSLRLDKEHEVRVRSRQRSFEKYSEFSEVLRVTFPQMDTLAACEEDFRFPWFLIIIFGIFGVAVMLFVVIFSKQQRIKMLILPPVPVPKIKGIDPDLLKEGKLEEVNTILGIHDNYKPDFYNDDSWVEFIELDIDDADEKTEESDTDRLLSDDQEKSAGILGAKDDDSGRTSCYDPDILDTDFHTSDMCDGTSEFAQPQKLKAEADLLCLDQKNLKNSPYDASLGSLHPSITLTMEDKPQPLLGSETESTHQLPSTPMSSPVSLANIDFYAQVSDITPAGGVVLSPGQKIKAGLAQGNTQLEVAAPCQENYSMNSAYFCESDAKKCIAAAPHMEATTCVKPSFNQEDIYITTESLTTTARMSETADTAPDAEPVPDYTTVHTVKSPRGLILNATALPLPDKKKFLSSCGYVSTDQLNKIMQ.

The first 18 residues, 1–18 (MDLWRVFLTLALAVSSDM), serve as a signal peptide directing secretion. Residues 19–265 (FPGSGATPAT…TLAACEEDFR (247 aa)) are Extracellular-facing. Disulfide bonds link Cys56–Cys66 and Cys101–Cys112. Asn115 carries N-linked (GlcNAc...) asparagine glycosylation. A disulfide bond links Cys126 and Cys140. The Fibronectin type-III domain maps to 151 to 254 (PPIGLNWTLL…EVLRVTFPQM (104 aa)). 3 N-linked (GlcNAc...) asparagine glycosylation sites follow: Asn156, Asn161, and Asn200. A WSXWS motif motif is present at residues 240 to 244 (YSEFS). Residues 266 to 289 (FPWFLIIIFGIFGVAVMLFVVIFS) form a helical membrane-spanning segment. The Cytoplasmic portion of the chain corresponds to 290-638 (KQQRIKMLIL…STDQLNKIMQ (349 aa)). The interval 295 to 380 (KMLILPPVPV…QEKSAGILGA (86 aa)) is required for JAK2 binding. The Box 1 motif motif lies at 298 to 306 (ILPPVPVPK). Residues 341–350 (DSWVEFIELD) carry the UbE motif motif. Ser342 bears the Phosphoserine mark. The interval 357–389 (KTEESDTDRLLSDDQEKSAGILGAKDDDSGRTS) is disordered. Positions 363-373 (TDRLLSDDQEK) are enriched in basic and acidic residues. 2 positions are modified to phosphotyrosine: Tyr487 and Tyr594.

This sequence belongs to the type I cytokine receptor family. Type 1 subfamily. On growth hormone (GH) binding, forms homodimers and binds JAK2 via a box 1-containing domain. In terms of processing, the soluble form (GHBP) is produced by phorbol ester-promoted proteolytic cleavage at the cell surface (shedding) by ADAM17/TACE. Shedding is inhibited by growth hormone (GH) binding to the receptor probably due to a conformational change in GHR rendering the receptor inaccessible to ADAM17. On GH binding, phosphorylated on tyrosine residues in the cytoplasmic domain by JAK2. Phosphorylation on either (or all of) Tyr-534, Tyr-566 and/or Tyr-627 is required for STAT5 activation. Phosphorylation on Tyr-333 would seem necessary for JAK2 activation. Post-translationally, ubiquitinated by the ECS(SOCS2) complex following ligand-binding and phosphorylation by JAK2, leading to its degradation by the proteasome. Regulation by the ECS(SOCS2) complex acts as a negative feedback loop of growth hormone receptor signaling. Ubiquitination is not sufficient for GHR internalization. In terms of tissue distribution, highest expression in liver. Also expressed in heart, kidney and muscle.

It is found in the cell membrane. The protein resides in the secreted. Receptor for pituitary gland growth hormone involved in regulating postnatal body growth. On ligand binding, couples to, and activates the JAK2/STAT5 pathway. Its function is as follows. Receptor for pituitary gland growth hormone (GH1) involved in regulating postnatal body growth. On ligand binding, couples to the JAK2/STAT5 pathway. Functionally, the soluble form (GHBP) acts as a reservoir of growth hormone in plasma and may be a modulator/inhibitor of GH signaling. The polypeptide is Growth hormone receptor (Ghr) (Rattus norvegicus (Rat)).